A 355-amino-acid chain; its full sequence is N-acetyl-gamma-glutamyl-phosphate reductase (355 aa).

Residue Cys152 is part of the active site.

It belongs to the NAGSA dehydrogenase family. Type 1 subfamily.

The protein resides in the cytoplasm. It catalyses the reaction N-acetyl-L-glutamate 5-semialdehyde + phosphate + NADP(+) = N-acetyl-L-glutamyl 5-phosphate + NADPH + H(+). It functions in the pathway amino-acid biosynthesis; L-arginine biosynthesis; N(2)-acetyl-L-ornithine from L-glutamate: step 3/4. Its function is as follows. Catalyzes the NADPH-dependent reduction of N-acetyl-5-glutamyl phosphate to yield N-acetyl-L-glutamate 5-semialdehyde. This Psychrobacter sp. (strain PRwf-1) protein is N-acetyl-gamma-glutamyl-phosphate reductase.